The sequence spans 512 residues: Nephrocan (512 aa).

Positions 1–19 are cleaved as a signal peptide; that stretch reads MHPLWAFLLGLSLTNGLSA. The LRRNT domain occupies 20 to 44; that stretch reads NCPGRCSCDSMQSVQCYRLMELPSG. LRR repeat units lie at residues 45-69, 71-93, 94-117, 119-138, 139-162, 164-185, 186-208, 210-232, 234-253, 254-276, 277-299, 301-320, 321-344, 346-371, 373-389, 390-413, and 415-442; these read IPST…NFTG, LALE…TFKT, LSTL…LPAN, EVLK…EFEG, LKNL…MLSP, ASLQ…PLSL, PHLK…VFTS, QNLQ…LPKS, LSLK…DMKH, LENL…AQQL, TNLT…LPSR, QKLD…EFQD, LRDL…ALQR, SQLS…TLAR, DLKG…ELRD, LKQL…ALEG, and PRLR…VLKA. Asn-66 is a glycosylation site (N-linked (GlcNAc...) asparagine). Basic and acidic residues predominate over residues 474–484; it reads EHHLQQSEKSK. The segment at 474 to 512 is disordered; that stretch reads EHHLQQSEKSKETKKKPKPEDSSSIRLNMDDDDDDYEID. Residues 503–512 show a composition bias toward acidic residues; the sequence is DDDDDDYEID.

It belongs to the small leucine-rich proteoglycan (SLRP) family. N-glycosylated. In terms of tissue distribution, expressed at highest levels in the kidney, where it is primarily detected in the epithelial cells of distal tubules and collecting ducts, and more weakly in proximal epithelial cells. Expressed at lower levels in heart and lung (at protein level). Detected in skeletal muscle.

It is found in the secreted. In terms of biological role, may inhibit TGF-beta signaling. This chain is Nephrocan, found in Mus musculus (Mouse).